Consider the following 313-residue polypeptide: Dimethyladenosine transferase (313 aa).

The segment at 1 to 21 is disordered; sequence MPKVKSGAIGRRRGRQEQRRE. Residues histidine 37, leucine 39, glycine 64, glutamate 85, aspartate 113, and asparagine 128 each coordinate S-adenosyl-L-methionine.

Belongs to the class I-like SAM-binding methyltransferase superfamily. rRNA adenine N(6)-methyltransferase family. As to quaternary structure, part of the small subunit (SSU) processome, composed of more than 70 proteins and the RNA chaperone small nucleolar RNA (snoRNA) U3.

It is found in the nucleus. The protein resides in the nucleoplasm. Its subcellular location is the nucleolus. The catalysed reaction is adenosine(1779)/adenosine(1780) in 18S rRNA + 4 S-adenosyl-L-methionine = N(6)-dimethyladenosine(1779)/N(6)-dimethyladenosine(1780) in 18S rRNA + 4 S-adenosyl-L-homocysteine + 4 H(+). Specifically dimethylates two adjacent adenosines in the loop of a conserved hairpin near the 3'-end of 18S rRNA in the 40S particle. Involved in the pre-rRNA processing steps leading to small-subunit rRNA production independently of its RNA-modifying catalytic activity. Part of the small subunit (SSU) processome, first precursor of the small eukaryotic ribosomal subunit. During the assembly of the SSU processome in the nucleolus, many ribosome biogenesis factors, an RNA chaperone and ribosomal proteins associate with the nascent pre-rRNA and work in concert to generate RNA folding, modifications, rearrangements and cleavage as well as targeted degradation of pre-ribosomal RNA by the RNA exosome. This chain is Dimethyladenosine transferase, found in Homo sapiens (Human).